We begin with the raw amino-acid sequence, 76 residues long: Protein MATERNALLY EXPRESSED GENE 4 (76 aa).

The signal sequence occupies residues 1–27; that stretch reads MEYRKRVDALVFFSLLLLGYFAAHAHG. Cys-53 and Cys-75 are oxidised to a cystine.

The protein belongs to the MEG family. As to expression, expressed exclusively in endosperm.

The sequence is that of Protein MATERNALLY EXPRESSED GENE 4 (MEG4) from Zea mays (Maize).